We begin with the raw amino-acid sequence, 2287 residues long: Serine/threonine-protein kinase MEC1 (2287 aa).

The region spanning 1310–1864 (TLAKKSLETD…LWYISILLNS (555 aa)) is the FAT domain. The region spanning 1968 to 2271 (FSSQYMVFNS…QVEALTQESC (304 aa)) is the PI3K/PI4K catalytic domain. The tract at residues 1974-1980 (VFNSLKK) is G-loop. The interval 2140–2148 (GLGDRHCEN) is catalytic loop. The interval 2160 to 2184 (HVDFDCLFEKGKKLPVPEIVPFRLT) is activation loop. The FATC domain maps to 2255–2287 (LALSVSGQVEALTQESCSVENLSKMYIGWLPFW).

This sequence belongs to the PI3/PI4-kinase family. ATM subfamily.

The protein localises to the nucleus. The enzyme catalyses L-seryl-[protein] + ATP = O-phospho-L-seryl-[protein] + ADP + H(+). It carries out the reaction L-threonyl-[protein] + ATP = O-phospho-L-threonyl-[protein] + ADP + H(+). Functionally, serine/threonine protein kinase which activates checkpoint signaling upon genotoxic stresses such as ionizing radiation (IR), ultraviolet light (UV), or DNA replication stalling, thereby acting as a DNA damage sensor. Recognizes the substrate consensus sequence [ST]-Q. Recruited to DNA lesions in order to initiate the DNA repair by homologous recombination. Phosphorylates histone H2A to form H2AS128ph (gamma-H2A) at sites of DNA damage, also involved in the regulation of DNA damage response mechanism. Required for cell growth and meiotic recombination. The polypeptide is Serine/threonine-protein kinase MEC1 (MEC1) (Kluyveromyces lactis (strain ATCC 8585 / CBS 2359 / DSM 70799 / NBRC 1267 / NRRL Y-1140 / WM37) (Yeast)).